Consider the following 98-residue polypeptide: Putative pterin-4-alpha-carbinolamine dehydratase (98 aa).

Belongs to the pterin-4-alpha-carbinolamine dehydratase family.

The enzyme catalyses (4aS,6R)-4a-hydroxy-L-erythro-5,6,7,8-tetrahydrobiopterin = (6R)-L-erythro-6,7-dihydrobiopterin + H2O. The polypeptide is Putative pterin-4-alpha-carbinolamine dehydratase (Chelativorans sp. (strain BNC1)).